Here is a 793-residue protein sequence, read N- to C-terminus: Putative glutamate--cysteine ligase 2-3 (793 aa).

The carboxylate-amine ligase stretch occupies residues 1–407; the sequence is MLASDPRKVG…RFWDRGDTAD (407 aa). Positions 367-390 are disordered; it reads TEHLPDVEVPPPREPGPKSTGAGR. The interval 408-793 is peptidase M20; sequence MTWTESTELD…ALTRLEDQSG (386 aa).

It in the C-terminal section; belongs to the glutamate--cysteine ligase type 2 family. YbdK subfamily.

The enzyme catalyses L-cysteine + L-glutamate + ATP = gamma-L-glutamyl-L-cysteine + ADP + phosphate + H(+). ATP-dependent carboxylate-amine ligase which exhibits weak glutamate--cysteine ligase activity. This chain is Putative glutamate--cysteine ligase 2-3, found in Rhodococcus jostii (strain RHA1).